The primary structure comprises 403 residues: Phospholipase A1-II 2 (403 aa).

Residue S218 is the Acyl-ester intermediate of the active site. Active-site charge relay system residues include S218, D286, and H323. Positions G381–D403 are disordered. A compositionally biased stretch (acidic residues) spans E392–D403.

This sequence belongs to the AB hydrolase superfamily. Lipase family.

The protein resides in the cytoplasm. In terms of biological role, acylhydrolase that catalyzes the hydrolysis of phospholipids at the sn-1 position. This is Phospholipase A1-II 2 from Oryza sativa subsp. indica (Rice).